Consider the following 489-residue polypeptide: Putative ABC transporter ATP-binding protein TDE_0282 (489 aa).

ABC transporter domains follow at residues 2–241 (ITLR…SMKL) and 269–487 (FAVK…MQLE). Residues 36-43 (GASGCGKT) and 301-308 (GENGAGKT) contribute to the ATP site.

This sequence belongs to the ABC transporter superfamily.

The protein resides in the cell inner membrane. In terms of biological role, probably part of an ABC transporter complex. Responsible for energy coupling to the transport system. In Treponema denticola (strain ATCC 35405 / DSM 14222 / CIP 103919 / JCM 8153 / KCTC 15104), this protein is Putative ABC transporter ATP-binding protein TDE_0282.